Reading from the N-terminus, the 221-residue chain is 21 kDa seed protein (221 aa).

An N-terminal signal peptide occupies residues 1 to 26 (MKTATAVVLLLFAFTSKSYFFGVANA). Cys-69 and Cys-116 form a disulfide bridge.

It belongs to the protease inhibitor I3 (leguminous Kunitz-type inhibitor) family.

The chain is 21 kDa seed protein (ASP) from Theobroma cacao (Cacao).